The sequence spans 336 residues: Sodium/bile acid cotransporter 7 (336 aa).

Residues 1–10 (MGLIARVRKE) lie on the Cytoplasmic side of the membrane. Residues 11–31 (WFIIGIVLVITFAKLQPSVGV) form a helical membrane-spanning segment. At 32–37 (KGGPLH) the chain is on the extracellular side. The helical transmembrane segment at 38-58 (PEITITYVAVSVIFFNSGLSL) threads the bilayer. Residues 59-71 (KTEELASALMHVK) lie on the Cytoplasmic side of the membrane. Residues 72–92 (LHFFVQTFTLVFFPIAIWLLL) traverse the membrane as a helical segment. Over 93-116 (KVLALTAINEWLLRGLQTVACMPP) the chain is Extracellular. Residues 117-137 (PVSSAVILTKAVGGNEAAAIF) traverse the membrane as a helical segment. Position 138 (asparagine 138) is a topological domain, cytoplasmic. A helical membrane pass occupies residues 139–159 (SAFGSFLGIVVTPLLLLVFLG). The Extracellular segment spans residues 160-163 (SSSS). The chain crosses the membrane as a helical span at residues 164 to 184 (VPFTSIFSQLFMTVVVPLIVG). Residues 185 to 201 (QVCRRFLRECLDRRKPP) are Cytoplasmic-facing. Residues 202 to 222 (FGAVSSVVLLMIIYSTFCDTF) form a helical membrane-spanning segment. Residues 223–233 (NNPNIELDHLS) are Extracellular-facing. A helical transmembrane segment spans residues 234 to 254 (LLTVVFIIFSIQLSFMALIFF). Over 255–270 (LSTRKSSGFSAADSVA) the chain is Cytoplasmic. Residues 271–291 (IMFCATHKSLTLGIPMLKIVF) traverse the membrane as a helical segment. Residues 292-298 (EGYEHLS) lie on the Extracellular side of the membrane. A helical membrane pass occupies residues 299 to 319 (LISVPLLIYHPAQILLGSVLL). At 320-336 (PSIKTWMSGRQKTLTPI) the chain is on the cytoplasmic side.

The protein belongs to the bile acid:sodium symporter (BASS) (TC 2.A.28) family.

It localises to the cell membrane. It is found in the endoplasmic reticulum membrane. Its subcellular location is the golgi apparatus membrane. Involved in teeth and skeletal development. Has an essential role in the biosynthesis and trafficking of glycosaminoglycans and glycoproteins to produce a proper functioning extracellular matrix. Required for extracellular matrix mineralization. Also involved in the regulation of cellular calcium homeostasis. Does not show transport activity towards bile acids or steroid sulfates. The polypeptide is Sodium/bile acid cotransporter 7 (slc10a7) (Danio rerio (Zebrafish)).